A 98-amino-acid polypeptide reads, in one-letter code: MAAVTGIALGMIETRGLVPAIEAADAMTKAAEVRLVGRQFVGGGYVTVLVRGETGAVNAAVRAGADACERVGDGLVAAHIIARVHSEVENILPKAPEA.

In terms of domain architecture, BMC spans 8–93; it reads ALGMIETRGL…VHSEVENILP (86 aa).

The protein belongs to the bacterial microcompartments protein family. CsoS1 subfamily. As to quaternary structure, homohexamer with a small central pore. Interacts with the N-terminus (residues 1-136) of RuBisCO (CbbL).

It localises to the carboxysome. Functionally, one of shell proteins of the carboxysome, a polyhedral inclusion where RuBisCO (ribulose bisphosphate carboxylase, ccbL-ccbS) is sequestered. Assembles into hexamers which make sheets that form the facets of the polyhedral carboxysome. The shell probably limits the diffusion of CO(2) into and out of the carboxysome. There are estimated to be 2970 CsoS1A/CsoS1C proteins per carboxysome (the proteins differ by only 1 residue). Unlike beta-carboxysomes, alpha-carboxysomes (Cb) can form without cargo protein. CsoS2 is essential for Cb formation and is also capable of targeting foreign proteins to the Cb. The Cb shell assembles with the aid of CsoS2; CsoS1A, CsoS1B and CsoS1C form the majority of the shell while CsoS4A and CsoS4B form vertices. CsoS1D forms pseudohexamers that probably control metabolite flux into and out of the shell. The polypeptide is Carboxysome shell protein CsoS1C (Halothiobacillus neapolitanus (strain ATCC 23641 / c2) (Thiobacillus neapolitanus)).